The chain runs to 178 residues: ATP synthase subunit delta (178 aa).

It belongs to the ATPase delta chain family. F-type ATPases have 2 components, F(1) - the catalytic core - and F(0) - the membrane proton channel. F(1) has five subunits: alpha(3), beta(3), gamma(1), delta(1), epsilon(1). F(0) has three main subunits: a(1), b(2) and c(10-14). The alpha and beta chains form an alternating ring which encloses part of the gamma chain. F(1) is attached to F(0) by a central stalk formed by the gamma and epsilon chains, while a peripheral stalk is formed by the delta and b chains.

It localises to the cell inner membrane. F(1)F(0) ATP synthase produces ATP from ADP in the presence of a proton or sodium gradient. F-type ATPases consist of two structural domains, F(1) containing the extramembraneous catalytic core and F(0) containing the membrane proton channel, linked together by a central stalk and a peripheral stalk. During catalysis, ATP synthesis in the catalytic domain of F(1) is coupled via a rotary mechanism of the central stalk subunits to proton translocation. In terms of biological role, this protein is part of the stalk that links CF(0) to CF(1). It either transmits conformational changes from CF(0) to CF(1) or is implicated in proton conduction. The sequence is that of ATP synthase subunit delta from Acinetobacter baumannii (strain AB307-0294).